The sequence spans 629 residues: tRNA uridine 5-carboxymethylaminomethyl modification enzyme MnmG (629 aa).

FAD is bound by residues 13–18, Val125, and Ser180; that span reads GGGHAG. 273–287 provides a ligand contact to NAD(+); that stretch reads GPRYCPSIEDKVMRF. Gln370 is a binding site for FAD.

This sequence belongs to the MnmG family. In terms of assembly, homodimer. Heterotetramer of two MnmE and two MnmG subunits. FAD serves as cofactor.

The protein resides in the cytoplasm. Its function is as follows. NAD-binding protein involved in the addition of a carboxymethylaminomethyl (cmnm) group at the wobble position (U34) of certain tRNAs, forming tRNA-cmnm(5)s(2)U34. The polypeptide is tRNA uridine 5-carboxymethylaminomethyl modification enzyme MnmG (Aliivibrio fischeri (strain ATCC 700601 / ES114) (Vibrio fischeri)).